We begin with the raw amino-acid sequence, 799 residues long: 1-phosphatidylinositol 4,5-bisphosphate phosphodiesterase delta-4 (799 aa).

The 109-residue stretch at 16-124 (LLMQEGMPMR…WMRGLHLLVD (109 aa)) folds into the PH domain. Residues 26–53 (KVRSKSWKKLRYFRLQNDGMTVWHARQA) are substrate binding. 3 consecutive EF-hand domains span residues 134–169 (RLDQ…MNVE), 170–205 (MDQE…LTKR), and 206–237 (AEVQ…EQKE). The Ca(2+) site is built by D147, N149, D151, K153, E158, D183, S185, S187, T189, and E194. Positions 213-243 (ESFSADGQKLTLLEFSDFLREEQKERDCTSE) match the GBA motif. The PI-PLC X-box domain maps to 290 to 435 (QDMTQPLNHY…LRRKILVKGK (146 aa)). H305 is an active-site residue. Ca(2+) contacts are provided by N306, E335, and D337. Residue H350 is part of the active site. E384 lines the Ca(2+) pocket. Residues K433 and K435 each coordinate substrate. Phosphoserine is present on S460. One can recognise a PI-PLC Y-box domain in the interval 530 to 646 (LSSLVIYLKS…GYVLKPDFLR (117 aa)). The substrate site is built by S559 and R586. The region spanning 646-773 (RDNQSSFHPE…QGYRHIHLLS (128 aa)) is the C2 domain. Residues I687, D689, N713, D742, Y743, and D744 each coordinate Ca(2+). A PDZ-binding motif is present at residues 768 to 771 (HIHL).

As to quaternary structure, interacts with GRIP1. Interacts (via GBA motif) with guanine nucleotide-binding protein G(i) alpha subunit GNAI3 (inactive GDP-bound form); low-affinity interaction. Ca(2+) serves as cofactor.

Its subcellular location is the membrane. The protein localises to the nucleus. It localises to the cytoplasm. The protein resides in the endoplasmic reticulum. It catalyses the reaction a 1,2-diacyl-sn-glycero-3-phospho-(1D-myo-inositol-4,5-bisphosphate) + H2O = 1D-myo-inositol 1,4,5-trisphosphate + a 1,2-diacyl-sn-glycerol + H(+). The catalysed reaction is a 1,2-diacyl-sn-glycero-3-phospho-(1D-myo-inositol) + H2O = 1D-myo-inositol 1-phosphate + a 1,2-diacyl-sn-glycerol + H(+). Hydrolyzes the phosphatidylinositol 4,5-bisphosphate (PIP2) to generate 2 second messenger molecules diacylglycerol (DAG) and inositol 1,4,5-trisphosphate (IP3). DAG mediates the activation of protein kinase C (PKC), while IP3 releases Ca(2+) from intracellular stores. Required for acrosome reaction in sperm during fertilization, probably by acting as an important enzyme for intracellular Ca(2+) mobilization in the zona pellucida-induced acrosome reaction. May play a role in cell growth. Modulates the liver regeneration in cooperation with nuclear PKC. Overexpression up-regulates the Erk signaling pathway and proliferation. The protein is 1-phosphatidylinositol 4,5-bisphosphate phosphodiesterase delta-4 (PLCD4) of Macaca fascicularis (Crab-eating macaque).